The sequence spans 153 residues: Transcription antitermination protein NusB (153 aa).

This sequence belongs to the NusB family.

In terms of biological role, involved in transcription antitermination. Required for transcription of ribosomal RNA (rRNA) genes. Binds specifically to the boxA antiterminator sequence of the ribosomal RNA (rrn) operons. This Beutenbergia cavernae (strain ATCC BAA-8 / DSM 12333 / CCUG 43141 / JCM 11478 / NBRC 16432 / NCIMB 13614 / HKI 0122) protein is Transcription antitermination protein NusB.